An 848-amino-acid chain; its full sequence is Trimethylamine-N-oxide reductase 1 (848 aa).

The segment at residues 1–39 is a signal peptide (tat-type signal); the sequence is MNNNDLFQASRRRFLAQLGGLTVAGMLGPSLLTPRRATA. Residue Ser-191 coordinates Mo-bis(molybdopterin guanine dinucleotide).

The protein belongs to the prokaryotic molybdopterin-containing oxidoreductase family. As to quaternary structure, interacts with the N-terminal domain of TorC. Mo-bis(molybdopterin guanine dinucleotide) is required as a cofactor. In terms of processing, exported by the Tat system. The position of the signal peptide cleavage has been experimentally proven.

It localises to the periplasm. It catalyses the reaction trimethylamine + 2 Fe(III)-[cytochrome c] + H2O = trimethylamine N-oxide + 2 Fe(II)-[cytochrome c] + 3 H(+). Functionally, reduces trimethylamine-N-oxide (TMAO) into trimethylamine; an anaerobic reaction coupled to energy-yielding reactions. The sequence is that of Trimethylamine-N-oxide reductase 1 (torA) from Escherichia coli (strain K12).